A 192-amino-acid polypeptide reads, in one-letter code: Crossover junction endodeoxyribonuclease RuvC (192 aa).

Residues D20, E80, and D153 contribute to the active site. Mg(2+) is bound by residues D20, E80, and D153.

The protein belongs to the RuvC family. In terms of assembly, homodimer which binds Holliday junction (HJ) DNA. The HJ becomes 2-fold symmetrical on binding to RuvC with unstacked arms; it has a different conformation from HJ DNA in complex with RuvA. In the full resolvosome a probable DNA-RuvA(4)-RuvB(12)-RuvC(2) complex forms which resolves the HJ. Mg(2+) is required as a cofactor.

The protein localises to the cytoplasm. It catalyses the reaction Endonucleolytic cleavage at a junction such as a reciprocal single-stranded crossover between two homologous DNA duplexes (Holliday junction).. Its function is as follows. The RuvA-RuvB-RuvC complex processes Holliday junction (HJ) DNA during genetic recombination and DNA repair. Endonuclease that resolves HJ intermediates. Cleaves cruciform DNA by making single-stranded nicks across the HJ at symmetrical positions within the homologous arms, yielding a 5'-phosphate and a 3'-hydroxyl group; requires a central core of homology in the junction. The consensus cleavage sequence is 5'-(A/T)TT(C/G)-3'. Cleavage occurs on the 3'-side of the TT dinucleotide at the point of strand exchange. HJ branch migration catalyzed by RuvA-RuvB allows RuvC to scan DNA until it finds its consensus sequence, where it cleaves and resolves the cruciform DNA. In Christiangramia forsetii (strain DSM 17595 / CGMCC 1.15422 / KT0803) (Gramella forsetii), this protein is Crossover junction endodeoxyribonuclease RuvC.